Consider the following 462-residue polypeptide: Argininosuccinate lyase (462 aa).

It belongs to the lyase 1 family. Argininosuccinate lyase subfamily.

The protein resides in the cytoplasm. The enzyme catalyses 2-(N(omega)-L-arginino)succinate = fumarate + L-arginine. It participates in amino-acid biosynthesis; L-arginine biosynthesis; L-arginine from L-ornithine and carbamoyl phosphate: step 3/3. This Caldicellulosiruptor saccharolyticus (strain ATCC 43494 / DSM 8903 / Tp8T 6331) protein is Argininosuccinate lyase.